The following is a 242-amino-acid chain: Ubiquitin-conjugating enzyme E2 6 (242 aa).

Residues 1–220 lie on the Cytoplasmic side of the membrane; that stretch reads MASRQSQKRL…HSTPSFGVQR (220 aa). The region spanning 5–156 is the UBC core domain; that stretch reads QSQKRLTKEY…NQRFTKQFPD (152 aa). Cysteine 87 acts as the Glycyl thioester intermediate in catalysis. Residues 170-190 form a disordered region; that stretch reads AREQAAATTDSTDPEKPFDVR. The chain crosses the membrane as a helical span at residues 221 to 240; it reads FTLVGVVVAAFIAAYFNFFS.

This sequence belongs to the ubiquitin-conjugating enzyme family.

The protein localises to the endoplasmic reticulum membrane. It catalyses the reaction S-ubiquitinyl-[E1 ubiquitin-activating enzyme]-L-cysteine + [E2 ubiquitin-conjugating enzyme]-L-cysteine = [E1 ubiquitin-activating enzyme]-L-cysteine + S-ubiquitinyl-[E2 ubiquitin-conjugating enzyme]-L-cysteine.. The protein operates within protein modification; protein ubiquitination. Its function is as follows. Catalyzes the covalent attachment of ubiquitin to other proteins. Functions in degradation of misfolded or regulated proteins localized in the endoplasmic reticulum (ER) lumen or membrane via the ubiquitin-proteasome system. Cognate E2 conjugating enzyme for the DOA10 ubiquitin ligase complex, which is part of the ERAD-C pathway responsible for the rapid degradation of membrane proteins with misfolded cytoplasmic domains. This is Ubiquitin-conjugating enzyme E2 6 (UBC6) from Debaryomyces hansenii (strain ATCC 36239 / CBS 767 / BCRC 21394 / JCM 1990 / NBRC 0083 / IGC 2968) (Yeast).